The chain runs to 200 residues: GMP synthase [glutamine-hydrolyzing] subunit A (200 aa).

In terms of domain architecture, Glutamine amidotransferase type-1 spans 3–193; it reads KIYVVDNGGQ…IGICASYREI (191 aa). Cys80 functions as the Nucleophile in the catalytic mechanism. Catalysis depends on residues His167 and Glu169.

As to quaternary structure, heterodimer composed of a glutamine amidotransferase subunit (A) and a GMP-binding subunit (B).

It catalyses the reaction XMP + L-glutamine + ATP + H2O = GMP + L-glutamate + AMP + diphosphate + 2 H(+). It participates in purine metabolism; GMP biosynthesis; GMP from XMP (L-Gln route): step 1/1. Its function is as follows. Catalyzes the synthesis of GMP from XMP. The chain is GMP synthase [glutamine-hydrolyzing] subunit A from Thermoplasma acidophilum (strain ATCC 25905 / DSM 1728 / JCM 9062 / NBRC 15155 / AMRC-C165).